A 468-amino-acid polypeptide reads, in one-letter code: Phosphatidylglycerol--prolipoprotein diacylglyceryl transferase (468 aa).

Transmembrane regions (helical) follow at residues 21–41, 56–76, and 96–116; these read LPVR…LLIG, YDIA…YHLA, and IWDG…GAWI. Arg-144 contacts a 1,2-diacyl-sn-glycero-3-phospho-(1'-sn-glycerol). 3 helical membrane passes run 192–212, 218–238, and 256–276; these read VVQP…VALI, FIIG…AGRF, and INSF…ILAP. The interval 349-468 is disordered; the sequence is VVQVADRDGE…RWWRLRRRRQ (120 aa). A compositionally biased stretch (low complexity) spans 391–406; that stretch reads AEAASAAPEEPAALAS. Basic and acidic residues predominate over residues 445–455; the sequence is DGIRRQDDFSS. Over residues 456–468 the composition is skewed to basic residues; the sequence is RRRRWWRLRRRRQ.

It belongs to the Lgt family.

It is found in the cell membrane. It carries out the reaction L-cysteinyl-[prolipoprotein] + a 1,2-diacyl-sn-glycero-3-phospho-(1'-sn-glycerol) = an S-1,2-diacyl-sn-glyceryl-L-cysteinyl-[prolipoprotein] + sn-glycerol 1-phosphate + H(+). It participates in protein modification; lipoprotein biosynthesis (diacylglyceryl transfer). Its function is as follows. Catalyzes the transfer of the diacylglyceryl group from phosphatidylglycerol to the sulfhydryl group of the N-terminal cysteine of a prolipoprotein, the first step in the formation of mature lipoproteins. The chain is Phosphatidylglycerol--prolipoprotein diacylglyceryl transferase from Mycobacterium bovis (strain ATCC BAA-935 / AF2122/97).